Consider the following 240-residue polypeptide: UDP-2,3-diacylglucosamine hydrolase (240 aa).

Asp-8, His-10, Asp-41, Asn-79, and His-114 together coordinate Mn(2+). A substrate-binding site is contributed by 79–80 (NR). Residues Asp-122, Ser-160, Asn-164, Lys-167, and His-195 each contribute to the substrate site. 2 residues coordinate Mn(2+): His-195 and His-197.

The protein belongs to the LpxH family. Mn(2+) serves as cofactor.

The protein localises to the cell inner membrane. The enzyme catalyses UDP-2-N,3-O-bis[(3R)-3-hydroxytetradecanoyl]-alpha-D-glucosamine + H2O = 2-N,3-O-bis[(3R)-3-hydroxytetradecanoyl]-alpha-D-glucosaminyl 1-phosphate + UMP + 2 H(+). The protein operates within glycolipid biosynthesis; lipid IV(A) biosynthesis; lipid IV(A) from (3R)-3-hydroxytetradecanoyl-[acyl-carrier-protein] and UDP-N-acetyl-alpha-D-glucosamine: step 4/6. Hydrolyzes the pyrophosphate bond of UDP-2,3-diacylglucosamine to yield 2,3-diacylglucosamine 1-phosphate (lipid X) and UMP by catalyzing the attack of water at the alpha-P atom. Involved in the biosynthesis of lipid A, a phosphorylated glycolipid that anchors the lipopolysaccharide to the outer membrane of the cell. This Escherichia coli O6:H1 (strain CFT073 / ATCC 700928 / UPEC) protein is UDP-2,3-diacylglucosamine hydrolase.